We begin with the raw amino-acid sequence, 373 residues long: Peptide chain release factor 2 (373 aa).

Glutamine 251 bears the N5-methylglutamine mark.

This sequence belongs to the prokaryotic/mitochondrial release factor family. Post-translationally, methylated by PrmC. Methylation increases the termination efficiency of RF2.

The protein resides in the cytoplasm. Its function is as follows. Peptide chain release factor 2 directs the termination of translation in response to the peptide chain termination codons UGA and UAA. The polypeptide is Peptide chain release factor 2 (Salinispora tropica (strain ATCC BAA-916 / DSM 44818 / JCM 13857 / NBRC 105044 / CNB-440)).